The primary structure comprises 1264 residues: Phosphatidylinositol 3,4,5-trisphosphate 5-phosphatase 2 (1264 aa).

One can recognise an SH2 domain in the interval 26–122; it reads WYHRDLSRAA…GLVCALLLPV (97 aa). Basic and acidic residues predominate over residues 124-137; it reads REREPDPPDDRDVS. Residues 124–182 are disordered; that stretch reads REREPDPPDDRDVSDGEDEKPPLPPRSGSTSISAPVGPGSPPAAPETPTTPAAESAPNG. S137 carries the post-translational modification Phosphoserine. Over residues 169–180 the composition is skewed to low complexity; sequence ETPTTPAAESAP. The residue at position 170 (T170) is a Phosphothreonine. Residues S246 and S358 each carry the phosphoserine modification. Y892 bears the Phosphotyrosine mark. S896 carries the phosphoserine modification. Residues 903 to 1123 form a disordered region; the sequence is GAKSKAPSVS…TFLGEVASGD (221 aa). Positions 944–954 are enriched in pro residues; the sequence is PPPTGRPPAPP. Positions 950–955 match the SH3-binding motif; that stretch reads PPAPPR. The span at 957 to 971 shows a compositional bias: basic and acidic residues; that stretch reads ASREEPLTPRLKAEG. T964 bears the Phosphothreonine mark. Residues 989 to 992 carry the NPXY motif motif; sequence NPAY. Y992 is modified (phosphotyrosine). Pro residues-rich tracts occupy residues 1002–1017, 1054–1065, and 1093–1110; these read LLPPEPPSPARAPVPP, LPPPDFPPPPLP, and GPPPPKAHPRPPLPPGPS. At S1137 the chain carries Phosphoserine. The disordered stretch occupies residues 1140–1178; it reads DYAPAGPGRSVLLPGPLELQPPRGLPSDYGRPLSFPPPR. Phosphotyrosine is present on residues Y1141 and Y1168. Positions 1210–1264 constitute an SAM domain; the sequence is WLRAIGLERYEEGLVHNGWDDLEFLSDITEEDLEEAGVQDPAHKRLLLDTLQLSK. S1263 carries the phosphoserine modification.

This sequence belongs to the inositol 1,4,5-trisphosphate 5-phosphatase family. As to quaternary structure, interacts with tyrosine phosphorylated form of SHC1. Interacts with EGFR. Upon stimulation by the EGF signaling pathway, it forms a complex with SHC1 and EGFR. Interacts with cytoskeletal protein SORBS3/vinexin, promoting its localization to the periphery of cells. Forms a complex with filamin (FLNA or FLNB), actin, GPIb (GP1BA or GP1BB) that regulates cortical and submembraneous actin. Interacts with c-Met/MET, when c-Met/MET is phosphorylated on 'Tyr-1356'. Interacts with p130Cas/BCAR1. Interacts with CENTD3/ARAP3 via its SAM domain. Interacts with c-Cbl/CBL and CAP/SORBS1. Interacts with activated EPHA2 receptor. Interacts with receptor FCGR2A. Interacts with receptor FCGR2B. Interacts with tyrosine kinase ABL1. Interacts with tyrosine kinase TEC. Interacts with CSF1R. Interacts (via N-terminus) with SH3YL1 (via SH3 domain). Interacts with FCRL6 (tyrosine phosphorylated form). Interacts (via SH2 domain) with tyrosine phosphorylated KLRC1 (via ITIM). Interacts with NEDD9/HEF1. In terms of processing, tyrosine phosphorylated by the members of the SRC family after exposure to a diverse array of extracellular stimuli such as insulin, growth factors such as EGF or PDGF, chemokines, integrin ligands and hypertonic and oxidative stress. May be phosphorylated upon IgG receptor FCGR2B-binding. Phosphorylated at Tyr-992 following cell attachment and spreading. Phosphorylated at Tyr-1168 following EGF signaling pathway stimulation. Phosphorylated at Thr-964 in response to PDGF.

The protein localises to the cytoplasm. Its subcellular location is the cytosol. It is found in the membrane. The protein resides in the cell projection. It localises to the filopodium. The protein localises to the lamellipodium. Its subcellular location is the basal cell membrane. It is found in the nucleus. The protein resides in the nucleus speckle. It localises to the cytoskeleton. The protein localises to the spindle pole. It catalyses the reaction a 1,2-diacyl-sn-glycero-3-phospho-(1D-myo-inositol-3,4,5-trisphosphate) + H2O = a 1,2-diacyl-sn-glycero-3-phospho-(1D-myo-inositol-3,4-bisphosphate) + phosphate. It carries out the reaction 1,2-dioctanoyl-sn-glycero-3-phospho-(1D-myo-inositol-3,4,5-trisphosphate) + H2O = 1,2-dioctanoyl-sn-glycero-3-phospho-(1D-myo-inositol-3,4-bisphosphate) + phosphate. The enzyme catalyses 1,2-dihexadecanoyl-sn-glycero-3-phospho-(1D-myo-inositol-3,4,5-trisphosphate) + H2O = 1,2-dihexadecanoyl-sn-glycero-3-phospho-(1D-myo-inositol-3,4-bisphosphate) + phosphate. Activated upon translocation to the sites of synthesis of PtdIns(3,4,5)P3 in the membrane. Enzymatic activity is enhanced in the presence of phosphatidylserine. Functionally, phosphatidylinositol (PtdIns) phosphatase that specifically hydrolyzes the 5-phosphate of phosphatidylinositol-3,4,5-trisphosphate (PtdIns(3,4,5)P3) to produce PtdIns(3,4)P2, thereby negatively regulating the PI3K (phosphoinositide 3-kinase) pathways. Required for correct mitotic spindle orientation and therefore progression of mitosis. Plays a central role in regulation of PI3K-dependent insulin signaling, although the precise molecular mechanisms and signaling pathways remain unclear. While overexpression reduces both insulin-stimulated MAP kinase and Akt activation, its absence does not affect insulin signaling or GLUT4 trafficking. Confers resistance to dietary obesity. May act by regulating AKT2, but not AKT1, phosphorylation at the plasma membrane. Part of a signaling pathway that regulates actin cytoskeleton remodeling. Required for the maintenance and dynamic remodeling of actin structures as well as in endocytosis, having a major impact on ligand-induced EGFR internalization and degradation. Participates in regulation of cortical and submembraneous actin by hydrolyzing PtdIns(3,4,5)P3 thereby regulating membrane ruffling. Regulates cell adhesion and cell spreading. Required for HGF-mediated lamellipodium formation, cell scattering and spreading. Acts as a negative regulator of EPHA2 receptor endocytosis by inhibiting via PI3K-dependent Rac1 activation. Acts as a regulator of neuritogenesis by regulating PtdIns(3,4,5)P3 level and is required to form an initial protrusive pattern, and later, maintain proper neurite outgrowth. Acts as a negative regulator of the FC-gamma-RIIA receptor (FCGR2A). Mediates signaling from the FC-gamma-RIIB receptor (FCGR2B), playing a central role in terminating signal transduction from activating immune/hematopoietic cell receptor systems. Involved in EGF signaling pathway. Upon stimulation by EGF, it is recruited by EGFR and dephosphorylates PtdIns(3,4,5)P3. Plays a negative role in regulating the PI3K-PKB pathway, possibly by inhibiting PKB activity. Down-regulates Fc-gamma-R-mediated phagocytosis in macrophages independently of INPP5D/SHIP1. In macrophages, down-regulates NF-kappa-B-dependent gene transcription by regulating macrophage colony-stimulating factor (M-CSF)-induced signaling. Plays a role in the localization of AURKA and NEDD9/HEF1 to the basolateral membrane at interphase in polarized cysts, thereby mediates cell cycle homeostasis, cell polarization and cilia assembly. Additionally promotion of cilia growth is also facilitated by hydrolysis of (PtdIns(3,4,5)P3) to PtdIns(3,4)P2. Promotes formation of apical membrane-initiation sites during the initial stages of lumen formation via Rho family-induced actin filament organization and CTNNB1 localization to cell-cell contacts. May also hydrolyze PtdIns(1,3,4,5)P4, and could thus affect the levels of the higher inositol polyphosphates like InsP6. Involved in endochondral ossification. The polypeptide is Phosphatidylinositol 3,4,5-trisphosphate 5-phosphatase 2 (Canis lupus familiaris (Dog)).